A 270-amino-acid chain; its full sequence is Putative phosphoenolpyruvate synthase regulatory protein (270 aa).

Residue 150–157 coordinates ADP; it reads GVSRCGKT.

The protein belongs to the pyruvate, phosphate/water dikinase regulatory protein family. PSRP subfamily.

It carries out the reaction [pyruvate, water dikinase] + ADP = [pyruvate, water dikinase]-phosphate + AMP + H(+). The catalysed reaction is [pyruvate, water dikinase]-phosphate + phosphate + H(+) = [pyruvate, water dikinase] + diphosphate. Functionally, bifunctional serine/threonine kinase and phosphorylase involved in the regulation of the phosphoenolpyruvate synthase (PEPS) by catalyzing its phosphorylation/dephosphorylation. The chain is Putative phosphoenolpyruvate synthase regulatory protein from Shewanella pealeana (strain ATCC 700345 / ANG-SQ1).